Reading from the N-terminus, the 315-residue chain is Vomeronasal type-1 receptor 54 (315 aa).

Topologically, residues 1-15 (MNKMNRLSHNTEIRN) are extracellular. A helical transmembrane segment spans residues 16-40 (AIYSGVGIGISGNSFLLLFHIFKYI). Residues 41 to 51 (RGQRSRHIDLP) lie on the Cytoplasmic side of the membrane. A helical transmembrane segment spans residues 52–71 (IGLLSLIHLVMLIAMSLVAT). Residues 72-90 (DIFMPWGRWGDTTCKCVIS) lie on the Extracellular side of the membrane. Residues cysteine 85 and cysteine 172 are joined by a disulfide bond. A helical membrane pass occupies residues 91–112 (LYRFCRSLSLCATSLLSILQAV). Topologically, residues 113 to 132 (TLNPRNSCLEKFKRKSPHYM) are cytoplasmic. A helical transmembrane segment spans residues 133–154 (LGCLLFLSVFYTFISSPLATYI). Residues 155 to 193 (TAKSNLTSPSFTYITTSCSLAPMSYSFHLTVFILLTSRD) are Extracellular-facing. A helical transmembrane segment spans residues 194–212 (VIFVGLMLLSSGYMVTFLG). At 213–239 (RHKKQSQFLHITSFSLKPSAEKRAMRT) the chain is on the cytoplasmic side. A helical membrane pass occupies residues 240–260 (ILCLMSFFVLMYTLDSIVSYI). Residues 261-267 (RSIDDGQ) lie on the Extracellular side of the membrane. The chain crosses the membrane as a helical span at residues 268–288 (IFYCVHIFTAHGYATVSPFLI). The Cytoplasmic portion of the chain corresponds to 289–315 (LSTEKYIINIFRSTFGRMVTIILLRNR).

This sequence belongs to the G-protein coupled receptor 1 family.

The protein resides in the cell membrane. Functionally, putative pheromone receptor implicated in the regulation of social and reproductive behavior. This chain is Vomeronasal type-1 receptor 54 (Vmn1r54), found in Mus musculus (Mouse).